Reading from the N-terminus, the 354-residue chain is Guanine nucleotide-binding protein G(t) subunit alpha-2 (354 aa).

A disordered region spans residues M1–A27. The N-myristoyl glycine moiety is linked to residue G2. Over residues A7–A27 the composition is skewed to basic and acidic residues. The G-alpha domain maps to K32–F354. The interval K35 to T48 is G1 motif. GTP contacts are provided by residues G40–S47, L175–T181, D200–Q204, N269–D272, and A326. Residues S47 and T181 each coordinate Mg(2+). The interval D173–T181 is G2 motif. The G3 motif stretch occupies residues F196 to R205. The G4 motif stretch occupies residues V265–D272. The G5 motif stretch occupies residues T324 to T329.

Belongs to the G-alpha family. G(i/o/t/z) subfamily. As to quaternary structure, g proteins are composed of 3 units; alpha, beta and gamma. The alpha chain contains the guanine nucleotide binding site. Retinal rod outer segment.

It is found in the cell projection. The protein resides in the cilium. The protein localises to the photoreceptor outer segment. Its subcellular location is the photoreceptor inner segment. In terms of biological role, guanine nucleotide-binding proteins (G proteins) are involved as modulators or transducers in various transmembrane signaling systems. Transducin is an amplifier and one of the transducers of a visual impulse that performs the coupling between rhodopsin and cGMP-phosphodiesterase. This is Guanine nucleotide-binding protein G(t) subunit alpha-2 (GNAT2) from Bos taurus (Bovine).